A 990-amino-acid chain; its full sequence is DNA ligase 4 (990 aa).

A disordered region spans residues 57-84 (TQKKGRQPPGPRRKAGPHGHSNLSPHEA). Residues Glu-324, Lys-326, Leu-327, Arg-331, Glu-394, Phe-436, Glu-496, Lys-501, Lys-518, and Lys-520 each coordinate ATP. Lys-326 serves as the catalytic N6-AMP-lysine intermediate. Mg(2+) is bound at residue Glu-394. Mg(2+) is bound at residue Glu-496. BRCT domains are found at residues 728-821 (PQSK…LPYL) and 900-989 (YMFS…RYQW).

Belongs to the ATP-dependent DNA ligase family. Requires Mg(2+) as cofactor.

It is found in the nucleus. The enzyme catalyses ATP + (deoxyribonucleotide)n-3'-hydroxyl + 5'-phospho-(deoxyribonucleotide)m = (deoxyribonucleotide)n+m + AMP + diphosphate.. DNA ligase involved in DNA non-homologous end joining (NHEJ); required for double-strand break (DSB) repair. In Phaeosphaeria nodorum (strain SN15 / ATCC MYA-4574 / FGSC 10173) (Glume blotch fungus), this protein is DNA ligase 4 (LIG4).